The sequence spans 457 residues: UDP-N-acetylmuramate--L-alanine ligase (457 aa).

118 to 124 (GTHGKTT) serves as a coordination point for ATP.

This sequence belongs to the MurCDEF family.

Its subcellular location is the cytoplasm. The enzyme catalyses UDP-N-acetyl-alpha-D-muramate + L-alanine + ATP = UDP-N-acetyl-alpha-D-muramoyl-L-alanine + ADP + phosphate + H(+). Its pathway is cell wall biogenesis; peptidoglycan biosynthesis. Functionally, cell wall formation. The sequence is that of UDP-N-acetylmuramate--L-alanine ligase from Clostridium perfringens (strain 13 / Type A).